The following is a 189-amino-acid chain: UPF0301 protein RF_0044 (189 aa).

Belongs to the UPF0301 (AlgH) family.

This Rickettsia felis (strain ATCC VR-1525 / URRWXCal2) (Rickettsia azadi) protein is UPF0301 protein RF_0044.